We begin with the raw amino-acid sequence, 152 residues long: NAD(P)H-quinone oxidoreductase subunit N (152 aa).

It belongs to the complex I NdhN subunit family. In terms of assembly, NDH-1 can be composed of about 15 different subunits; different subcomplexes with different compositions have been identified which probably have different functions.

It localises to the cellular thylakoid membrane. It carries out the reaction a plastoquinone + NADH + (n+1) H(+)(in) = a plastoquinol + NAD(+) + n H(+)(out). The catalysed reaction is a plastoquinone + NADPH + (n+1) H(+)(in) = a plastoquinol + NADP(+) + n H(+)(out). NDH-1 shuttles electrons from an unknown electron donor, via FMN and iron-sulfur (Fe-S) centers, to quinones in the respiratory and/or the photosynthetic chain. The immediate electron acceptor for the enzyme in this species is believed to be plastoquinone. Couples the redox reaction to proton translocation, and thus conserves the redox energy in a proton gradient. Cyanobacterial NDH-1 also plays a role in inorganic carbon-concentration. This chain is NAD(P)H-quinone oxidoreductase subunit N, found in Prochlorococcus marinus (strain SARG / CCMP1375 / SS120).